Here is a 417-residue protein sequence, read N- to C-terminus: Laccase-like protein claX (417 aa).

This sequence belongs to the multicopper oxidase family.

Laccase-like protein; part of the gene cluster that mediates the biosynthesis of clavilactone A, a meroterpenoid that features a unique benzo-fused ten-membered carbocyclic ring unit with an alpha,beta-epoxy-gamma-lactone moiety, forming an intriguing 10/5/3 tricyclic nested skeleton. ClaR, ClaS and ClaT are sufficient to produce clavilactone A and the function of claX, if any, has still to be identified. The biosynthesis begins with the prenyltransferase claS that transfers geranyl pyrophosphate (GPP) to hydroquinone to produces geranylhydroquinon. The cytochrome P450 monooxygenase claR then catalyzes the diradical coupling reaction between the intramolecular hydroquinone and allyl moieties to form the benzo-fused ten-membered carbocyclic ring unit of wigantol. Finally the cytochrome P450 monooxygenase claT exquisitely and stereoselectively assembles the alpha,beta-epoxy-gamma-lactone moiety, producing clavilactone A via arnebinol A. This is Laccase-like protein claX from Ampulloclitocybe clavipes (Club foot).